Here is a 549-residue protein sequence, read N- to C-terminus: MAAKDVLFGNDARVKMLRGVNILADAVKVTLGPKGRNVVIDKSFGGPIITKDGVTVAKEIELEDKFENMGAQMVKEVASKANDEAGDGTTTATVLAQAIVNEGLKSIAAGMNPMDLKRGIDKAVIAAVEALKESSTPVTDNKAIEQVGTISANSDETVGKIIATAMEKVGTEGVITVEEGQALTDELDVVEGMQFDRGYLSPYFINKQENGTVELENPFILLVDKKISNIRELLTTLEGVAKAGKPLLIIAEDVEGEALATLVVNNMRGIVKVAAVKAPGFGDRRKAMLQDVATLTAGTVISEEIGMELEKVTLEDLGQAKRVVISKDTTIIIDGIGVEADIQARVSQIRGQIEDSSSDYDKEKLQERLAKLAGGVAVIKIGAATEMEMKEKKSRVEDALHATRAAVEEGVVAGGGVALIRAADAIKDLEGANEDQTHGINVAIRAMEAPLRQIVANCGDEPSVVLNEVRNGKGNYGYNAGNSTYGDMIEMGILDPTKVTRSALQFAASVAGLMLTTEAMITDAPVKDAGGMPDMSGMGGGMGGMGGMM.

Residues Thr30 to Pro33, Lys51, Asp87 to Thr91, Gly415, and Asp495 each bind ATP.

This sequence belongs to the chaperonin (HSP60) family. Forms a cylinder of 14 subunits composed of two heptameric rings stacked back-to-back. Interacts with the co-chaperonin GroES.

The protein localises to the cytoplasm. It carries out the reaction ATP + H2O + a folded polypeptide = ADP + phosphate + an unfolded polypeptide.. Together with its co-chaperonin GroES, plays an essential role in assisting protein folding. The GroEL-GroES system forms a nano-cage that allows encapsulation of the non-native substrate proteins and provides a physical environment optimized to promote and accelerate protein folding. The polypeptide is Chaperonin GroEL (Colwellia maris).